We begin with the raw amino-acid sequence, 364 residues long: tRNA/tmRNA (uracil-C(5))-methyltransferase (364 aa).

Positions 188, 216, 221, 237, and 297 each coordinate S-adenosyl-L-methionine. The active-site Nucleophile is Cys322. Glu356 acts as the Proton acceptor in catalysis.

It belongs to the class I-like SAM-binding methyltransferase superfamily. RNA M5U methyltransferase family. TrmA subfamily.

It carries out the reaction uridine(54) in tRNA + S-adenosyl-L-methionine = 5-methyluridine(54) in tRNA + S-adenosyl-L-homocysteine + H(+). The catalysed reaction is uridine(341) in tmRNA + S-adenosyl-L-methionine = 5-methyluridine(341) in tmRNA + S-adenosyl-L-homocysteine + H(+). Dual-specificity methyltransferase that catalyzes the formation of 5-methyluridine at position 54 (m5U54) in all tRNAs, and that of position 341 (m5U341) in tmRNA (transfer-mRNA). This is tRNA/tmRNA (uracil-C(5))-methyltransferase from Colwellia psychrerythraea (strain 34H / ATCC BAA-681) (Vibrio psychroerythus).